The primary structure comprises 439 residues: Methionine aminopeptidase 2-2 (439 aa).

Residues 1-90 (MAAQAPPTDE…SQLFPDKQYP (90 aa)) form a disordered region. Residues 10–23 (ELSKLSVEDADNKP) show a composition bias toward basic and acidic residues. Acidic residues predominate over residues 35 to 45 (DEDDSEDDAED). The span at 54–68 (AKKKKKRKPRKKKKN) shows a compositional bias: basic residues. H192 lines the substrate pocket. A divalent metal cation contacts are provided by D212, D223, and H292. H300 is a substrate binding site. The a divalent metal cation site is built by E325 and E420.

This sequence belongs to the peptidase M24A family. Methionine aminopeptidase eukaryotic type 2 subfamily. It depends on Co(2+) as a cofactor. Zn(2+) serves as cofactor. The cofactor is Mn(2+). Requires Fe(2+) as cofactor.

It localises to the cytoplasm. The enzyme catalyses Release of N-terminal amino acids, preferentially methionine, from peptides and arylamides.. Its function is as follows. Cotranslationally removes the N-terminal methionine from nascent proteins. The N-terminal methionine is often cleaved when the second residue in the primary sequence is small and uncharged (Met-Ala-, Cys, Gly, Pro, Ser, Thr, or Val). The sequence is that of Methionine aminopeptidase 2-2 from Chaetomium globosum (strain ATCC 6205 / CBS 148.51 / DSM 1962 / NBRC 6347 / NRRL 1970) (Soil fungus).